Reading from the N-terminus, the 328-residue chain is Phosphate acyltransferase (328 aa).

This sequence belongs to the PlsX family. As to quaternary structure, homodimer. Probably interacts with PlsY.

Its subcellular location is the cytoplasm. It catalyses the reaction a fatty acyl-[ACP] + phosphate = an acyl phosphate + holo-[ACP]. It functions in the pathway lipid metabolism; phospholipid metabolism. Catalyzes the reversible formation of acyl-phosphate (acyl-PO(4)) from acyl-[acyl-carrier-protein] (acyl-ACP). This enzyme utilizes acyl-ACP as fatty acyl donor, but not acyl-CoA. The polypeptide is Phosphate acyltransferase (Staphylococcus aureus (strain bovine RF122 / ET3-1)).